A 506-amino-acid chain; its full sequence is Maturase K (506 aa).

Belongs to the intron maturase 2 family. MatK subfamily.

The protein localises to the plastid. The protein resides in the chloroplast. Its function is as follows. Usually encoded in the trnK tRNA gene intron. Probably assists in splicing its own and other chloroplast group II introns. This chain is Maturase K, found in Styphnolobium japonicum (Japanese pagoda tree).